A 155-amino-acid chain; its full sequence is Large ribosomal subunit protein uL30 (155 aa).

Belongs to the universal ribosomal protein uL30 family. Part of the 50S ribosomal subunit.

The protein is Large ribosomal subunit protein uL30 of Cenarchaeum symbiosum (strain A).